A 105-amino-acid chain; its full sequence is MRKIKRDDEVIVIAGKDKGKRGTIKRVLQDGCYVVSGVNMIKRHTKPNPMQGKQGGIVEREAPIHASNVAIFNQETGKADRVGFQIQEDGTKVRIYKSTQKQIDA.

The protein belongs to the universal ribosomal protein uL24 family. As to quaternary structure, part of the 50S ribosomal subunit.

Functionally, one of two assembly initiator proteins, it binds directly to the 5'-end of the 23S rRNA, where it nucleates assembly of the 50S subunit. One of the proteins that surrounds the polypeptide exit tunnel on the outside of the subunit. The chain is Large ribosomal subunit protein uL24 from Chromohalobacter salexigens (strain ATCC BAA-138 / DSM 3043 / CIP 106854 / NCIMB 13768 / 1H11).